The following is a 337-amino-acid chain: Dihydroorotate dehydrogenase (quinone) (337 aa).

FMN is bound by residues 62 to 66 and Thr-86; that span reads AGLDK. Residue Lys-66 participates in substrate binding. 111 to 115 serves as a coordination point for substrate; sequence NRMGF. Residues Asn-140 and Asn-173 each contribute to the FMN site. Asn-173 provides a ligand contact to substrate. Residue Ser-176 is the Nucleophile of the active site. Asn-178 is a binding site for substrate. Residues Lys-218 and Thr-246 each contribute to the FMN site. 247–248 contributes to the substrate binding site; the sequence is NT. FMN is bound by residues Gly-269, Gly-298, and 319-320; that span reads YS.

The protein belongs to the dihydroorotate dehydrogenase family. Type 2 subfamily. Monomer. Requires FMN as cofactor.

The protein localises to the cell membrane. The enzyme catalyses (S)-dihydroorotate + a quinone = orotate + a quinol. The protein operates within pyrimidine metabolism; UMP biosynthesis via de novo pathway; orotate from (S)-dihydroorotate (quinone route): step 1/1. In terms of biological role, catalyzes the conversion of dihydroorotate to orotate with quinone as electron acceptor. This Wigglesworthia glossinidia brevipalpis protein is Dihydroorotate dehydrogenase (quinone).